The chain runs to 378 residues: Queuine tRNA-ribosyltransferase (378 aa).

Asp-89 acts as the Proton acceptor in catalysis. Residues 89–93 (DSGGF), Asp-143, Gln-194, and Gly-221 each bind substrate. An RNA binding region spans residues 252-258 (GVGTPAN). Catalysis depends on Asp-271, which acts as the Nucleophile. The segment at 276–280 (ARNGR) is RNA binding; important for wobble base 34 recognition. Cys-309, Cys-311, Cys-314, and His-340 together coordinate Zn(2+).

This sequence belongs to the queuine tRNA-ribosyltransferase family. As to quaternary structure, homodimer. Within each dimer, one monomer is responsible for RNA recognition and catalysis, while the other monomer binds to the replacement base PreQ1. The cofactor is Zn(2+).

It catalyses the reaction 7-aminomethyl-7-carbaguanine + guanosine(34) in tRNA = 7-aminomethyl-7-carbaguanosine(34) in tRNA + guanine. Its pathway is tRNA modification; tRNA-queuosine biosynthesis. Its function is as follows. Catalyzes the base-exchange of a guanine (G) residue with the queuine precursor 7-aminomethyl-7-deazaguanine (PreQ1) at position 34 (anticodon wobble position) in tRNAs with GU(N) anticodons (tRNA-Asp, -Asn, -His and -Tyr). Catalysis occurs through a double-displacement mechanism. The nucleophile active site attacks the C1' of nucleotide 34 to detach the guanine base from the RNA, forming a covalent enzyme-RNA intermediate. The proton acceptor active site deprotonates the incoming PreQ1, allowing a nucleophilic attack on the C1' of the ribose to form the product. After dissociation, two additional enzymatic reactions on the tRNA convert PreQ1 to queuine (Q), resulting in the hypermodified nucleoside queuosine (7-(((4,5-cis-dihydroxy-2-cyclopenten-1-yl)amino)methyl)-7-deazaguanosine). The polypeptide is Queuine tRNA-ribosyltransferase (Lachnoclostridium phytofermentans (strain ATCC 700394 / DSM 18823 / ISDg) (Clostridium phytofermentans)).